Consider the following 113-residue polypeptide: Putative pterin-4-alpha-carbinolamine dehydratase (113 aa).

The protein belongs to the pterin-4-alpha-carbinolamine dehydratase family.

The catalysed reaction is (4aS,6R)-4a-hydroxy-L-erythro-5,6,7,8-tetrahydrobiopterin = (6R)-L-erythro-6,7-dihydrobiopterin + H2O. In Bordetella bronchiseptica (strain ATCC BAA-588 / NCTC 13252 / RB50) (Alcaligenes bronchisepticus), this protein is Putative pterin-4-alpha-carbinolamine dehydratase.